The chain runs to 1162 residues: PAN2-PAN3 deadenylation complex catalytic subunit PAN2 (1162 aa).

WD repeat units follow at residues 27–66, 153–193, 196–233, and 300–339; these read AKEK…YTRH, NTVQ…VVKT, GHSC…NVYD, and HPCQ…TGFT. The segment at 341–491 is linker; sequence TATTILEYPD…LMNYKPSNDR (151 aa). Residues 401 to 443 form a disordered region; that stretch reads VPLPPKSSAASSSHTALSTSSDSRPNTARSGNPSSGGQKYRLL. Low complexity predominate over residues 407–423; the sequence is SSAASSSHTALSTSSDS. The span at 424–437 shows a compositional bias: polar residues; sequence RPNTARSGNPSSGG. A USP domain is found at 492 to 904; it reads EVPPAFTKLQ…TPEIAIYSDA (413 aa). An Exonuclease domain is found at 956-1126; that stretch reads VALDAEFVAL…IEDAYTALVL (171 aa). Positions 959, 961, 1068, and 1119 each coordinate a divalent metal cation.

This sequence belongs to the peptidase C19 family. PAN2 subfamily. In terms of assembly, forms a heterotrimer with an asymmetric homodimer of the regulatory subunit PAN3 to form the poly(A)-nuclease (PAN) deadenylation complex. A divalent metal cation serves as cofactor.

The protein localises to the cytoplasm. The catalysed reaction is Exonucleolytic cleavage of poly(A) to 5'-AMP.. Its activity is regulated as follows. Positively regulated by the regulatory subunit PAN3. Catalytic subunit of the poly(A)-nuclease (PAN) deadenylation complex, one of two cytoplasmic mRNA deadenylases involved in mRNA turnover. PAN specifically shortens poly(A) tails of RNA and the activity is stimulated by poly(A)-binding protein PAB1. PAN deadenylation is followed by rapid degradation of the shortened mRNA tails by the CCR4-NOT complex. Deadenylated mRNAs are then degraded by two alternative mechanisms, namely exosome-mediated 3'-5' exonucleolytic degradation, or deadenylation-dependent mRNA decaping and subsequent 5'-3' exonucleolytic degradation by XRN1. May also be involved in post-transcriptional maturation of mRNA poly(A) tails. The polypeptide is PAN2-PAN3 deadenylation complex catalytic subunit PAN2 (Eremothecium gossypii (strain ATCC 10895 / CBS 109.51 / FGSC 9923 / NRRL Y-1056) (Yeast)).